A 241-amino-acid chain; its full sequence is Neuromodulin (241 aa).

A compositionally biased stretch (basic and acidic residues) spans Thr-1 to His-26. Residues Thr-1–Ala-241 are disordered. The IQ domain maps to Ala-25–Pro-54. Composition is skewed to low complexity over residues Ala-80–Glu-95 and Ser-118–Ser-131. 2 stretches are compositionally biased toward basic and acidic residues: residues Ser-132 to Thr-147 and Lys-159 to Gln-171. Positions Ala-172 to Pro-198 are enriched in low complexity. Basic and acidic residues-rich tracts occupy residues Thr-208–Pro-220 and Glu-232–Ala-241.

This sequence belongs to the neuromodulin family. In terms of assembly, binds calmodulin with a greater affinity in the absence of Ca(2+) than in its presence. Post-translationally, palmitoylated. Palmitoylation is essential for plasma membrane association.

It is found in the cell membrane. The protein resides in the cell projection. It localises to the growth cone membrane. The protein localises to the synapse. Its subcellular location is the filopodium membrane. This protein is associated with nerve growth. It is a major component of the motile 'growth cones' that form the tips of elongating axons. Plays a role in axonal and dendritic filopodia induction. The protein is Neuromodulin (GAP43) of Serinus canaria (Island canary).